The chain runs to 356 residues: MSLLSDLINLNLSDTTEKVIAEYIWIGGSGLDLRSKARTLPGPVKNPSELPKWNYDGSSTGQAPGQDSEVIIYPQAIFKDPFRRGNNILVICDAYTPAGEPIPTNKRHNAAKIFSNPDVVAEEPWYGIEQEYTLLQKEVNWPVGWPVGGFPGPQGPYYCGVGADKAFGRDIVDAHYKACVYAGINISGINGEVMPGQWEFQVGPAVGISAGDELWVARYILERITEVAGVVLSFDPKPIKGDWNGAGAHTNYSTKTMRNDGGYEEIKSAIQKLGKRHKEHIAAYGEGNERRLTGRHETADINTFLWGVANRGASIRVGRDTEKAGKGYFEDRRPASNMDPYVVTSMIADTTILWKP.

The 81-residue stretch at 19-99 folds into the GS beta-grasp domain; that stretch reads VIAEYIWIGG…VICDAYTPAG (81 aa). The interval 41-64 is disordered; sequence PGPVKNPSELPKWNYDGSSTGQAP. A GS catalytic domain is found at 106-356; sequence KRHNAAKIFS…IADTTILWKP (251 aa).

This sequence belongs to the glutamine synthetase family. In terms of assembly, homooctamer. As to expression, roots.

The protein localises to the cytoplasm. It catalyses the reaction L-glutamate + NH4(+) + ATP = L-glutamine + ADP + phosphate + H(+). The chain is Glutamine synthetase PR-1 from Phaseolus vulgaris (Kidney bean).